A 494-amino-acid chain; its full sequence is Glutamyl-tRNA(Gln) amidotransferase subunit A (494 aa).

Active-site charge relay system residues include Lys-81 and Ser-156. The active-site Acyl-ester intermediate is Ser-180.

It belongs to the amidase family. GatA subfamily. As to quaternary structure, heterotrimer of A, B and C subunits.

It carries out the reaction L-glutamyl-tRNA(Gln) + L-glutamine + ATP + H2O = L-glutaminyl-tRNA(Gln) + L-glutamate + ADP + phosphate + H(+). Allows the formation of correctly charged Gln-tRNA(Gln) through the transamidation of misacylated Glu-tRNA(Gln) in organisms which lack glutaminyl-tRNA synthetase. The reaction takes place in the presence of glutamine and ATP through an activated gamma-phospho-Glu-tRNA(Gln). This chain is Glutamyl-tRNA(Gln) amidotransferase subunit A, found in Mycobacterium tuberculosis (strain ATCC 25177 / H37Ra).